We begin with the raw amino-acid sequence, 160 residues long: Crossover junction endodeoxyribonuclease RuvC (160 aa).

Catalysis depends on residues Asp-9, Glu-68, and Asp-141. 3 residues coordinate Mg(2+): Asp-9, Glu-68, and Asp-141.

This sequence belongs to the RuvC family. Homodimer which binds Holliday junction (HJ) DNA. The HJ becomes 2-fold symmetrical on binding to RuvC with unstacked arms; it has a different conformation from HJ DNA in complex with RuvA. In the full resolvosome a probable DNA-RuvA(4)-RuvB(12)-RuvC(2) complex forms which resolves the HJ. Mg(2+) is required as a cofactor.

It localises to the cytoplasm. It catalyses the reaction Endonucleolytic cleavage at a junction such as a reciprocal single-stranded crossover between two homologous DNA duplexes (Holliday junction).. Functionally, the RuvA-RuvB-RuvC complex processes Holliday junction (HJ) DNA during genetic recombination and DNA repair. Endonuclease that resolves HJ intermediates. Cleaves cruciform DNA by making single-stranded nicks across the HJ at symmetrical positions within the homologous arms, yielding a 5'-phosphate and a 3'-hydroxyl group; requires a central core of homology in the junction. The consensus cleavage sequence is 5'-(A/T)TT(C/G)-3'. Cleavage occurs on the 3'-side of the TT dinucleotide at the point of strand exchange. HJ branch migration catalyzed by RuvA-RuvB allows RuvC to scan DNA until it finds its consensus sequence, where it cleaves and resolves the cruciform DNA. In Campylobacter jejuni subsp. jejuni serotype O:2 (strain ATCC 700819 / NCTC 11168), this protein is Crossover junction endodeoxyribonuclease RuvC.